A 735-amino-acid polypeptide reads, in one-letter code: Catalase-peroxidase (735 aa).

A disordered region spans residues 1 to 31 (MENNTNPISGQGKCPFSGGAAKQSAGAGTRN). A compositionally biased stretch (low complexity) spans 17-28 (SGGAAKQSAGAG). Positions 103 to 226 (WHSAGTYRVA…LAAVQMGLIY (124 aa)) form a cross-link, tryptophyl-tyrosyl-methioninium (Trp-Tyr) (with M-252). H104 functions as the Proton acceptor in the catalytic mechanism. A cross-link (tryptophyl-tyrosyl-methioninium (Tyr-Met) (with W-103)) is located at residues 226 to 252 (YVNPEGPNGNPDPLASARDIRETFARM). H267 lines the heme b pocket. Residues 352-371 (KPKNGAGAGTVPDAHNSSKS) form a disordered region.

The protein belongs to the peroxidase family. Peroxidase/catalase subfamily. As to quaternary structure, homodimer or homotetramer. The cofactor is heme b. Formation of the three residue Trp-Tyr-Met cross-link is important for the catalase, but not the peroxidase activity of the enzyme.

The catalysed reaction is H2O2 + AH2 = A + 2 H2O. It catalyses the reaction 2 H2O2 = O2 + 2 H2O. Bifunctional enzyme with both catalase and broad-spectrum peroxidase activity. The chain is Catalase-peroxidase from Flavobacterium psychrophilum (strain ATCC 49511 / DSM 21280 / CIP 103535 / JIP02/86).